Here is a 328-residue protein sequence, read N- to C-terminus: Aryl-hydrocarbon-interacting protein-like 1 (328 aa).

Residues 53–145 enclose the PPIase FKBP-type domain; the sequence is KQVGQPMSII…DLDELQKEPQ (93 aa). TPR repeat units lie at residues 178–211, 230–263, and 264–297; these read VPLL…LRNL, NTLI…HPGI, and VKAY…EPSM.

Interacts with NUB1.

The protein resides in the cytoplasm. Its subcellular location is the nucleus. May be important in protein trafficking and/or protein folding and stabilization. This is Aryl-hydrocarbon-interacting protein-like 1 (Aipl1) from Mus musculus (Mouse).